We begin with the raw amino-acid sequence, 271 residues long: Putative cysteine protease YopT-like blr2140 (271 aa).

The segment at Met-1 to Thr-81 is disordered. A compositionally biased stretch (polar residues) spans Gly-7–Glu-29. The segment covering Thr-65 to Thr-81 has biased composition (low complexity). Cys-100 is a catalytic residue. Residues Ser-114–Gln-136 are disordered. Active-site residues include His-213 and Asp-228.

This sequence belongs to the peptidase C58 family.

Potential cysteine protease, which may play a central role after invasion of host cell. This chain is Putative cysteine protease YopT-like blr2140, found in Bradyrhizobium diazoefficiens (strain JCM 10833 / BCRC 13528 / IAM 13628 / NBRC 14792 / USDA 110).